The following is a 218-amino-acid chain: Adenylate kinase (218 aa).

Residue G10–T15 participates in ATP binding. The interval S30–V59 is NMP. AMP contacts are provided by residues T31, R36, G57–V59, G85–R88, and Q92. The interval G122–D159 is LID. ATP-binding positions include R123 and S132–Y133. Residues R156 and R167 each contribute to the AMP site. G203 is an ATP binding site.

Belongs to the adenylate kinase family. As to quaternary structure, monomer.

It is found in the cytoplasm. The enzyme catalyses AMP + ATP = 2 ADP. Its pathway is purine metabolism; AMP biosynthesis via salvage pathway; AMP from ADP: step 1/1. In terms of biological role, catalyzes the reversible transfer of the terminal phosphate group between ATP and AMP. Plays an important role in cellular energy homeostasis and in adenine nucleotide metabolism. The protein is Adenylate kinase of Bordetella petrii (strain ATCC BAA-461 / DSM 12804 / CCUG 43448).